A 312-amino-acid chain; its full sequence is Putative electron transfer flavoprotein subunit YdiR (312 aa).

254–282 (LYLTLGISGQIQHMVGGNGAKVIVAINKD) provides a ligand contact to FAD.

The protein belongs to the ETF alpha-subunit/FixB family. YdiR and YdiQ form a heterodimer.

May play a role in a redox process. The sequence is that of Putative electron transfer flavoprotein subunit YdiR (ydiR) from Escherichia coli (strain K12).